The sequence spans 137 residues: Proofreading thioesterase EntH (137 aa).

The active-site Nucleophile or proton acceptor is E63.

It belongs to the thioesterase PaaI family. As to quaternary structure, homotetramer. Dimer of dimers. Interacts specifically with the aryl carrier protein (ArCP) domain of EntB.

It is found in the cytoplasm. Its pathway is siderophore biosynthesis; enterobactin biosynthesis. Required for optimal enterobactin synthesis. Acts as a proofreading enzyme that prevents EntB misacylation by hydrolyzing the thioester bound existing between EntB and wrongly charged molecules. The protein is Proofreading thioesterase EntH of Escherichia coli O6:H1 (strain CFT073 / ATCC 700928 / UPEC).